We begin with the raw amino-acid sequence, 287 residues long: Pyridoxal kinase PdxY (287 aa).

Substrate contacts are provided by residues serine 10 and 45-46 (TQ). ATP-binding positions include aspartate 112, alanine 144, glutamate 149, lysine 182, and 209–212 (RPLV). Aspartate 224 provides a ligand contact to substrate.

It belongs to the pyridoxine kinase family. PdxY subfamily. In terms of assembly, homodimer. Requires Mg(2+) as cofactor.

The catalysed reaction is pyridoxal + ATP = pyridoxal 5'-phosphate + ADP + H(+). It functions in the pathway cofactor metabolism; pyridoxal 5'-phosphate salvage; pyridoxal 5'-phosphate from pyridoxal: step 1/1. Pyridoxal kinase involved in the salvage pathway of pyridoxal 5'-phosphate (PLP). Catalyzes the phosphorylation of pyridoxal to PLP. This Escherichia coli O6:H1 (strain CFT073 / ATCC 700928 / UPEC) protein is Pyridoxal kinase PdxY.